The sequence spans 235 residues: MIQTFNDAQQKVWFDDALLHEDPSQCCNPEFWQQNGKVLGSATGRGTTWFVQLQQTQGALRHYRRGGLFGKLVADSYWFTGWEKTRSYQEFMLLNHLRDAGVNVPRPIAARVQKHGLLYKADLLSEKVPNARDLVSILQESPISDELYRKIGREIRKMHDAQVNHTDLNIHNILIDDQEKVWIIDFDKCYVQIGDSWKQGNLKRLKRSFEKEVCKRGINWSLEAFAIISSYKHEE.

The active site involves Asp167.

Belongs to the protein kinase superfamily. KdkA/RfaP family.

The protein resides in the cell inner membrane. The enzyme catalyses an alpha-Kdo-(2-&gt;6)-lipid IVA + ATP = a 4-O-phospho-alpha-Kdo-(2-&gt;6)-lipid IVA + ADP + H(+). The protein operates within bacterial outer membrane biogenesis; LPS core biosynthesis. Its function is as follows. Catalyzes the ATP-dependent phosphorylation of the 3-deoxy-D-manno-octulosonic acid (Kdo) residue in Kdo-lipid IV(A) at the 4-OH position. The protein is 3-deoxy-D-manno-octulosonic acid kinase (kdkA) of Vibrio cholerae serotype O1 (strain ATCC 39315 / El Tor Inaba N16961).